The sequence spans 308 residues: Ribosomal protein L11 methyltransferase (308 aa).

The S-adenosyl-L-methionine site is built by threonine 157, glycine 178, aspartate 200, and asparagine 243.

This sequence belongs to the methyltransferase superfamily. PrmA family.

It is found in the cytoplasm. The enzyme catalyses L-lysyl-[protein] + 3 S-adenosyl-L-methionine = N(6),N(6),N(6)-trimethyl-L-lysyl-[protein] + 3 S-adenosyl-L-homocysteine + 3 H(+). In terms of biological role, methylates ribosomal protein L11. This chain is Ribosomal protein L11 methyltransferase, found in Pelotomaculum thermopropionicum (strain DSM 13744 / JCM 10971 / SI).